Reading from the N-terminus, the 73-residue chain is Conotoxin Gla(3)-TxVI (73 aa).

The first 19 residues, 1 to 19 (MQKLIILLLVAAVLMSAQA), serve as a signal peptide directing secretion. A propeptide spanning residues 20-44 (VLQEKRPKEKIKFLSKRKTDAEKQQ) is cleaved from the precursor. Intrachain disulfides connect Cys-48–Cys-62, Cys-55–Cys-66, and Cys-61–Cys-71. Pro-49 bears the 4-hydroxyproline mark. A 4-carboxyglutamate; partial modification is found at Glu-53. Position 54 is a 4-hydroxyproline (Pro-54). A 4-carboxyglutamate modification is found at Glu-60. Trp-64 carries the 6'-bromotryptophan modification.

This sequence belongs to the conotoxin O2 superfamily. In terms of tissue distribution, expressed by the venom duct.

It localises to the secreted. This Conus textile (Cloth-of-gold cone) protein is Conotoxin Gla(3)-TxVI.